The chain runs to 81 residues: Putative membrane protein insertion efficiency factor (81 aa).

Positions 60-81 (WNPGGYDPVPTHNTSNSSPMAE) are disordered. The span at 70 to 81 (THNTSNSSPMAE) shows a compositional bias: polar residues.

Belongs to the UPF0161 family.

The protein localises to the cell inner membrane. In terms of biological role, could be involved in insertion of integral membrane proteins into the membrane. The polypeptide is Putative membrane protein insertion efficiency factor (Stutzerimonas stutzeri (strain A1501) (Pseudomonas stutzeri)).